The chain runs to 62 residues: Large ribosomal subunit protein eL37 (62 aa).

Zn(2+)-binding residues include cysteine 20, cysteine 23, cysteine 35, and cysteine 38. A C4-type zinc finger spans residues 20 to 38 (CRRCGRVSYNVKKGYCAAC).

It belongs to the eukaryotic ribosomal protein eL37 family. As to quaternary structure, part of the 50S ribosomal subunit. It depends on Zn(2+) as a cofactor.

Binds to the 23S rRNA. This chain is Large ribosomal subunit protein eL37, found in Pyrococcus furiosus (strain ATCC 43587 / DSM 3638 / JCM 8422 / Vc1).